The sequence spans 501 residues: MAALLLLFLFLFASSALSQDSLIGVNIGTEVTNMPSPTQVVALLKSQNINRVRLYDADRSMLLAFAHTGVQVIISVPNDQLLGISQSNATAANWVTRNVAAYYPATNITTIAVGSEVLTSLTNAASVLVSALKYIQAALVTANLDRQIKVSTPHSSTIILDSFPPSQAFFNKTWDPVIVPLLKFLQSTGSPLLLNVYPYFDYVQSNGVIPLDYALFQPLQANKEAVDANTLLHYTNVFDAIVDAAYFAMSYLNFTNIPIVVTESGWPSKGGPSEHDATVENANTYNSNLIQHVINKTGTPKHPGTAVTTYIYELYNEDTRPGPVSEKNWGLFYTNGTPVYTLRLAGAGAILANDTTNQTFCIAKEKVDRKMLQAALDWACGPGKVDCSALMQGESCYEPDDVVAHSTYAFNAYYQKMGKASGSCDFKGVATVTTTDPSRGTCVFPGSAKSNQTLGNNTSALAPSANSTTSGCIPKYYHHPHASFGDLTLLSLLLIIALVFL.

The signal sequence occupies residues 1-18; that stretch reads MAALLLLFLFLFASSALS. N-linked (GlcNAc...) asparagine glycosylation is found at Asn-88 and Asn-107. Glu-116 acts as the Proton donor in catalysis. N-linked (GlcNAc...) asparagine glycosylation is found at Asn-171 and Asn-253. Glu-263 acts as the Nucleophile in catalysis. 3 N-linked (GlcNAc...) asparagine glycosylation sites follow: Asn-295, Asn-353, and Asn-357. Cys-361 and Cys-424 are disulfide-bonded. 4 N-linked (GlcNAc...) asparagine glycosylation sites follow: Asn-451, Asn-456, Asn-457, and Asn-466. Ser-470 carries GPI-anchor amidated serine lipidation. Residues 471 to 501 constitute a propeptide, removed in mature form; sequence GCIPKYYHHPHASFGDLTLLSLLLIIALVFL.

Belongs to the glycosyl hydrolase 17 family. Contains two additional disulfide bonds.

The protein localises to the cell membrane. It catalyses the reaction Hydrolysis of (1-&gt;3)-beta-D-glucosidic linkages in (1-&gt;3)-beta-D-glucans.. The polypeptide is Glucan endo-1,3-beta-glucosidase 3 (Arabidopsis thaliana (Mouse-ear cress)).